The chain runs to 115 residues: Pro-FMRFamide-related neuropeptide FF (115 aa).

A signal peptide spans 1-22; the sequence is MDARQAAALLLVLLLVTDWSHA. Disordered stretches follow at residues 20–51 and 78–102; these read SHAE…AQTP and FGRN…LSSP. The propeptide occupies 23 to 66; that stretch reads EGPGGRDGGDQIFMEEDSGAHPAQDAQTPRSLLRSLLQAMQRPG. F78 bears the Phenylalanine amide mark. Positions 81–94 are excised as a propeptide; it reads NTRGSWSNKRLSPR. F112 is modified (phenylalanine amide).

The protein belongs to the FARP (FMRFamide related peptide) family.

It localises to the secreted. Morphine modulating peptides. Have wide-ranging physiologic effects, including the modulation of morphine-induced analgesia, elevation of arterial blood pressure, and increased somatostatin secretion from the pancreas. The neuropeptide FF potentiates and sensitizes ASIC3 cation channel. In Bos taurus (Bovine), this protein is Pro-FMRFamide-related neuropeptide FF (NPFF).